A 165-amino-acid polypeptide reads, in one-letter code: Cytochrome c-550-like protein (165 aa).

Residues Met1 to Ala30 form the signal peptide. Heme c contacts are provided by Cys75, Cys78, His79, and Cys129.

This sequence belongs to the cytochrome c family. PsbV subfamily. It depends on heme c as a cofactor.

The protein resides in the cellular thylakoid membrane. Its function is as follows. Possible low-potential cytochrome c. This Trichodesmium erythraeum (strain IMS101) protein is Cytochrome c-550-like protein (psbV2).